The chain runs to 605 residues: SET domain-containing protein SNOG_11806 (605 aa).

Positions 68–132 are disordered; sequence TLDLTGMKTP…SRKGTGGLRV (65 aa). The span at 75–89 shows a compositional bias: polar residues; the sequence is KTPQPSRSPTVTRNV. A compositionally biased stretch (acidic residues) spans 104-115; that stretch reads ESADDDDDDLQD. One can recognise an SET domain in the interval 473–579; it reads PPVQIYRTAE…AGSEITVDYG (107 aa).

Belongs to the class V-like SAM-binding methyltransferase superfamily.

This Phaeosphaeria nodorum (strain SN15 / ATCC MYA-4574 / FGSC 10173) (Glume blotch fungus) protein is SET domain-containing protein SNOG_11806.